The sequence spans 213 residues: Urease accessory protein UreG (213 aa).

14–21 is a binding site for GTP; it reads GPVGSGKT.

It belongs to the SIMIBI class G3E GTPase family. UreG subfamily. Homodimer. UreD, UreF and UreG form a complex that acts as a GTP-hydrolysis-dependent molecular chaperone, activating the urease apoprotein by helping to assemble the nickel containing metallocenter of UreC. The UreE protein probably delivers the nickel.

The protein localises to the cytoplasm. Facilitates the functional incorporation of the urease nickel metallocenter. This process requires GTP hydrolysis, probably effectuated by UreG. The polypeptide is Urease accessory protein UreG (Mesorhizobium japonicum (strain LMG 29417 / CECT 9101 / MAFF 303099) (Mesorhizobium loti (strain MAFF 303099))).